The chain runs to 491 residues: Glutamyl-tRNA(Gln) amidotransferase subunit A (491 aa).

Residues Lys-79 and Ser-154 each act as charge relay system in the active site. The active-site Acyl-ester intermediate is Ser-178.

It belongs to the amidase family. GatA subfamily. In terms of assembly, heterotrimer of A, B and C subunits.

It carries out the reaction L-glutamyl-tRNA(Gln) + L-glutamine + ATP + H2O = L-glutaminyl-tRNA(Gln) + L-glutamate + ADP + phosphate + H(+). In terms of biological role, allows the formation of correctly charged Gln-tRNA(Gln) through the transamidation of misacylated Glu-tRNA(Gln) in organisms which lack glutaminyl-tRNA synthetase. The reaction takes place in the presence of glutamine and ATP through an activated gamma-phospho-Glu-tRNA(Gln). This chain is Glutamyl-tRNA(Gln) amidotransferase subunit A, found in Alkaliphilus metalliredigens (strain QYMF).